Here is a 210-residue protein sequence, read N- to C-terminus: Vacuolar protein sorting-associated protein 2 homolog 3 (210 aa).

Residues 1–23 form a disordered region; that stretch reads MNIFTKKPNPREVLRESKREMTQ. Residues 9–23 show a composition bias toward basic and acidic residues; it reads NPREVLRESKREMTQ. A coiled-coil region spans residues 28–84; that stretch reads IEKEIGSLQSEEKKLVLEIKRTAKSGNEGATKILARQLIRLRQQIANLQGSRAQMRG. The segment at 178–200 is disordered; sequence LSSAPKGKIGGKKAEDVGSSGID.

The protein belongs to the SNF7 family. As to quaternary structure, component of the endosomal sorting required for transport complex III (ESCRT-III), composed at least of VPS2, VPS20, VPS24 and VPS32.

It is found in the endosome. In terms of biological role, component of the ESCRT-III complex, which is required for multivesicular bodies (MVBs) formation and sorting of endosomal cargo proteins into MVBs. The ESCRT-III complex is probably involved in the concentration of MVB cargo. This Arabidopsis thaliana (Mouse-ear cress) protein is Vacuolar protein sorting-associated protein 2 homolog 3 (VPS2.3).